The sequence spans 711 residues: Ribosomal RNA large subunit methyltransferase K/L (711 aa).

One can recognise a THUMP domain in the interval 42–153; it reads DAQRAVLWSR…KGRATISVDL (112 aa).

It belongs to the methyltransferase superfamily. RlmKL family.

Its subcellular location is the cytoplasm. It catalyses the reaction guanosine(2445) in 23S rRNA + S-adenosyl-L-methionine = N(2)-methylguanosine(2445) in 23S rRNA + S-adenosyl-L-homocysteine + H(+). It carries out the reaction guanosine(2069) in 23S rRNA + S-adenosyl-L-methionine = N(2)-methylguanosine(2069) in 23S rRNA + S-adenosyl-L-homocysteine + H(+). Specifically methylates the guanine in position 2445 (m2G2445) and the guanine in position 2069 (m7G2069) of 23S rRNA. This Xanthomonas oryzae pv. oryzae (strain MAFF 311018) protein is Ribosomal RNA large subunit methyltransferase K/L.